A 592-amino-acid polypeptide reads, in one-letter code: Potassium-transporting ATPase potassium-binding subunit (592 aa).

A run of 13 helical transmembrane segments spans residues 6–26 (WLET…FGTY), 67–87 (ACAM…MLLL), 136–156 (GFAV…IAAI), 179–199 (LYIL…QGVI), 283–303 (LSNI…TYTF), 312–332 (QGWA…GVFY), 359–379 (FGLA…CGAV), 389–409 (IGGM…GGVG), 411–431 (GLYT…LMIG), 450–470 (ITTV…AMIL), 489–511 (LYAF…GNTL), 519–539 (VAML…AGGL), and 559–579 (FALW…FPAL).

It belongs to the KdpA family. In terms of assembly, the system is composed of three essential subunits: KdpA, KdpB and KdpC.

Its subcellular location is the cell inner membrane. Part of the high-affinity ATP-driven potassium transport (or Kdp) system, which catalyzes the hydrolysis of ATP coupled with the electrogenic transport of potassium into the cytoplasm. This subunit binds the periplasmic potassium ions and delivers the ions to the membrane domain of KdpB through an intramembrane tunnel. The chain is Potassium-transporting ATPase potassium-binding subunit from Geotalea uraniireducens (strain Rf4) (Geobacter uraniireducens).